The chain runs to 354 residues: UDP-3-O-acylglucosamine N-acyltransferase (354 aa).

The Proton acceptor role is filled by histidine 247.

It belongs to the transferase hexapeptide repeat family. LpxD subfamily. Homotrimer.

The enzyme catalyses a UDP-3-O-[(3R)-3-hydroxyacyl]-alpha-D-glucosamine + a (3R)-hydroxyacyl-[ACP] = a UDP-2-N,3-O-bis[(3R)-3-hydroxyacyl]-alpha-D-glucosamine + holo-[ACP] + H(+). It functions in the pathway bacterial outer membrane biogenesis; LPS lipid A biosynthesis. In terms of biological role, catalyzes the N-acylation of UDP-3-O-acylglucosamine using 3-hydroxyacyl-ACP as the acyl donor. Is involved in the biosynthesis of lipid A, a phosphorylated glycolipid that anchors the lipopolysaccharide to the outer membrane of the cell. The polypeptide is UDP-3-O-acylglucosamine N-acyltransferase (Chlamydia trachomatis serovar L2b (strain UCH-1/proctitis)).